Consider the following 239-residue polypeptide: DNA repair protein RecO (239 aa).

It belongs to the RecO family.

In terms of biological role, involved in DNA repair and RecF pathway recombination. This is DNA repair protein RecO from Tolumonas auensis (strain DSM 9187 / NBRC 110442 / TA 4).